The primary structure comprises 411 residues: LIM domain-binding protein 1 (411 aa).

Disordered stretches follow at residues 284-330 (PPAE…TFAL) and 367-411 (DAAN…QASQ). Residues 302-318 (SGGSTMSSGGGNTNNSN) show a composition bias toward low complexity. The LIM interaction domain (LID) domain occupies 336-375 (DVMVVGEPTLMGGEFGDEDERLITRLENTQFDAANGIDDE).

The protein belongs to the LDB family. As to quaternary structure, forms homodimers and heterodimers. As to expression, first expressed at stages 15-16 in presumptive limb mesoderm. As limb outgrowth proceeds, expressed in the entire limb bud, concentrating in the distal mesoderm throughout limb development. Both hindlimbs and forelimbs exhibit similar expression patterns.

The protein resides in the nucleus. In terms of biological role, binds to the LIM domain of a wide variety of LIM domain-containing transcription factors. The protein is LIM domain-binding protein 1 of Gallus gallus (Chicken).